The following is a 143-amino-acid chain: MDIQTILEKTLPGLGYELVDFELTAQGTLRVFIDKEGGITVEDCATVSNHLSRVFMVEDIDYKNLEISSPGLDRPLKKAADFVRFAGQNAKIKTRLPIDGQKNFIGKIEGCENDTVTVSFDGKTVQIELGNIDKARLRPEFKF.

Belongs to the RimP family.

It is found in the cytoplasm. Functionally, required for maturation of 30S ribosomal subunits. This Neisseria meningitidis serogroup C / serotype 2a (strain ATCC 700532 / DSM 15464 / FAM18) protein is Ribosome maturation factor RimP.